Here is a 545-residue protein sequence, read N- to C-terminus: Sensory neuron membrane protein 1 (545 aa).

Topologically, residues 1-10 (MELKERNFKK) are cytoplasmic. Residues 11 to 31 (IGLICVAVLLCGMVFSYGIFP) form a helical membrane-spanning segment. At 32–464 (SILRFMIKQN…LFLGLKFNAT (433 aa)) the chain is on the extracellular side. N-linked (GlcNAc...) asparagine glycans are attached at residues Asn69, Asn214, and Asn227. 3 disulfide bridges follow: Cys266-Cys331, Cys295-Cys351, and Cys333-Cys340. N-linked (GlcNAc...) asparagine glycosylation is found at Asn444 and Asn462. The chain crosses the membrane as a helical span at residues 465–485 (VKWLTIIIGTVGAVGSAYMYF). Over 486–545 (RKETKTTDVAPVDVSTPDTNPSSAKDGVVNVSLGRNLPPVIDGLDKPPKLRATELQQERY) the chain is Cytoplasmic.

This sequence belongs to the CD36 family. In terms of tissue distribution, selectively expressed in antenna.

The protein localises to the cell membrane. Functionally, plays an olfactory role that is not restricted to pheromone sensitivity. The sequence is that of Sensory neuron membrane protein 1 (snmp1) from Anopheles gambiae (African malaria mosquito).